The primary structure comprises 240 residues: Methylthioribulose-1-phosphate dehydratase (240 aa).

Cysteine 99 lines the substrate pocket. Zn(2+) is bound by residues histidine 116 and histidine 118. Glutamate 145 functions as the Proton donor/acceptor in the catalytic mechanism. Residue histidine 201 coordinates Zn(2+).

Belongs to the aldolase class II family. MtnB subfamily. The cofactor is Zn(2+).

Its subcellular location is the cytoplasm. The enzyme catalyses 5-(methylsulfanyl)-D-ribulose 1-phosphate = 5-methylsulfanyl-2,3-dioxopentyl phosphate + H2O. The protein operates within amino-acid biosynthesis; L-methionine biosynthesis via salvage pathway; L-methionine from S-methyl-5-thio-alpha-D-ribose 1-phosphate: step 2/6. Functionally, catalyzes the dehydration of methylthioribulose-1-phosphate (MTRu-1-P) into 2,3-diketo-5-methylthiopentyl-1-phosphate (DK-MTP-1-P). In Paracoccidioides lutzii (strain ATCC MYA-826 / Pb01) (Paracoccidioides brasiliensis), this protein is Methylthioribulose-1-phosphate dehydratase.